The chain runs to 126 residues: Holo-[acyl-carrier-protein] synthase (126 aa).

Residues aspartate 8 and glutamate 57 each contribute to the Mg(2+) site.

This sequence belongs to the P-Pant transferase superfamily. AcpS family. It depends on Mg(2+) as a cofactor.

The protein resides in the cytoplasm. It carries out the reaction apo-[ACP] + CoA = holo-[ACP] + adenosine 3',5'-bisphosphate + H(+). Its function is as follows. Transfers the 4'-phosphopantetheine moiety from coenzyme A to a Ser of acyl-carrier-protein. This Vibrio cholerae serotype O1 (strain ATCC 39541 / Classical Ogawa 395 / O395) protein is Holo-[acyl-carrier-protein] synthase.